The following is a 25-amino-acid chain: Aggression-stimulating peptide (25 aa).

In terms of tissue distribution, expressed by the skin glands of male frogs.

Its subcellular location is the secreted. In terms of biological role, stimulates aggressive behavior in male frogs. No effect on female frogs. The sequence is that of Aggression-stimulating peptide from Leptodactylus fallax (Mountain chicken frog).